The sequence spans 1117 residues: DNA-directed RNA polymerase subunit beta (1117 aa).

Residues 1094–1117 are disordered; that stretch reads QLARRTPPRPTYESLSRESLDDDE. Positions 1108–1117 are enriched in basic and acidic residues; the sequence is LSRESLDDDE.

This sequence belongs to the RNA polymerase beta chain family. In cyanobacteria the RNAP catalytic core is composed of 2 alpha, 1 beta, 1 beta', 1 gamma and 1 omega subunit. When a sigma factor is associated with the core the holoenzyme is formed, which can initiate transcription.

The catalysed reaction is RNA(n) + a ribonucleoside 5'-triphosphate = RNA(n+1) + diphosphate. Functionally, DNA-dependent RNA polymerase catalyzes the transcription of DNA into RNA using the four ribonucleoside triphosphates as substrates. This is DNA-directed RNA polymerase subunit beta from Trichormus variabilis (strain ATCC 29413 / PCC 7937) (Anabaena variabilis).